A 35-amino-acid polypeptide reads, in one-letter code: Photosystem II reaction center protein T (35 aa).

A helical membrane pass occupies residues 3–23 (ALVYTFLLVSTLGIIFFAIFF).

This sequence belongs to the PsbT family. In terms of assembly, PSII is composed of 1 copy each of membrane proteins PsbA, PsbB, PsbC, PsbD, PsbE, PsbF, PsbH, PsbI, PsbJ, PsbK, PsbL, PsbM, PsbT, PsbY, PsbZ, Psb30/Ycf12, at least 3 peripheral proteins of the oxygen-evolving complex and a large number of cofactors. It forms dimeric complexes.

The protein resides in the plastid. The protein localises to the chloroplast thylakoid membrane. Its function is as follows. Found at the monomer-monomer interface of the photosystem II (PS II) dimer, plays a role in assembly and dimerization of PSII. PSII is a light-driven water plastoquinone oxidoreductase, using light energy to abstract electrons from H(2)O, generating a proton gradient subsequently used for ATP formation. The protein is Photosystem II reaction center protein T of Metasequoia glyptostroboides (Dawn redwood).